We begin with the raw amino-acid sequence, 375 residues long: Chaperone protein DnaJ (375 aa).

Residues 5–70 (DFYEVLGVER…SKRAAYDQYG (66 aa)) enclose the J domain. A CR-type zinc finger spans residues 134-212 (GTTVSIRVPT…CHGEGRVEEY (79 aa)). Positions 147, 150, 164, 167, 186, 189, 200, and 203 each coordinate Zn(2+). CXXCXGXG motif repeat units lie at residues 147-154 (CKPCDGSG), 164-171 (CPTCGGIG), 186-193 (CPRCHGQG), and 200-207 (CNSCHGEG).

Belongs to the DnaJ family. As to quaternary structure, homodimer. Zn(2+) is required as a cofactor.

It localises to the cytoplasm. Functionally, participates actively in the response to hyperosmotic and heat shock by preventing the aggregation of stress-denatured proteins and by disaggregating proteins, also in an autonomous, DnaK-independent fashion. Unfolded proteins bind initially to DnaJ; upon interaction with the DnaJ-bound protein, DnaK hydrolyzes its bound ATP, resulting in the formation of a stable complex. GrpE releases ADP from DnaK; ATP binding to DnaK triggers the release of the substrate protein, thus completing the reaction cycle. Several rounds of ATP-dependent interactions between DnaJ, DnaK and GrpE are required for fully efficient folding. Also involved, together with DnaK and GrpE, in the DNA replication of plasmids through activation of initiation proteins. This chain is Chaperone protein DnaJ, found in Pseudomonas entomophila (strain L48).